The primary structure comprises 299 residues: Cytosolic sulfotransferase 1 (299 aa).

Residue 51 to 56 (KAGTTW) participates in 3'-phosphoadenylyl sulfate binding. Residue histidine 113 is the Proton acceptor of the active site. 3'-phosphoadenylyl sulfate is bound by residues arginine 135, serine 143, tyrosine 199, 233 to 238 (VQFDAM), and 261 to 263 (RKG).

The protein belongs to the sulfotransferase 1 family. In terms of tissue distribution, expressed in liver.

The protein resides in the cytoplasm. With respect to regulation, inhibited by Co(2+), Zn(2+), Cd(2+) and Pb(2+) ions. Inactivated by Hg(2+) and Cu(2+) ions. Sulfotransferase that utilizes 3'-phospho-5'-adenylyl sulfate (PAPS) as sulfonate donor to catalyze the sulfate conjugation of a variety of xenobiotic and endogenous compounds, including 2-naphthol, hydroxychlorobiphenyls, dopamine and T3 (triiodo-L-thyronine). This chain is Cytosolic sulfotransferase 1, found in Danio rerio (Zebrafish).